Reading from the N-terminus, the 1460-residue chain is Nonribosomal peptide synthetase 6 (1460 aa).

The interval 63–468 (EQAALHPEKI…GRQDQQVKLR (406 aa)) is adenylation. Positions 600–675 (EPTTEMEIKL…AMATKIKPLS (76 aa)) constitute a Carrier 1 domain. Ser-636 bears the O-(pantetheine 4'-phosphoryl)serine mark. The condensation stretch occupies residues 712 to 1135 (VQDVYPCTPL…AVLDPSEAQD (424 aa)). 2 Carrier domains span residues 1168–1241 (SPNE…GNEK) and 1236–1312 (SIGN…EETD). O-(pantetheine 4'-phosphoryl)serine is present on residues Ser-1202 and Ser-1273. The interval 1303 to 1324 (ELASSAEETDSPQTETNSNAPY) is disordered. Polar residues predominate over residues 1313 to 1322 (SPQTETNSNA).

The protein belongs to the NRP synthetase family.

It functions in the pathway siderophore biosynthesis. NRPS involved in extracellular coprogen-type siderophores biosynthesis. The role of extracellular siderophores in fungal virulence to plants is to supply iron to the fungus during plant infection, but not to act as phytotoxins, depriving their hosts of iron. This chain is Nonribosomal peptide synthetase 6, found in Alternaria brassicicola (Dark leaf spot agent).